Consider the following 156-residue polypeptide: Small ribosomal subunit protein uS7 (156 aa).

It belongs to the universal ribosomal protein uS7 family. Part of the 30S ribosomal subunit. Contacts proteins S9 and S11.

In terms of biological role, one of the primary rRNA binding proteins, it binds directly to 16S rRNA where it nucleates assembly of the head domain of the 30S subunit. Is located at the subunit interface close to the decoding center, probably blocks exit of the E-site tRNA. In Aster yellows witches'-broom phytoplasma (strain AYWB), this protein is Small ribosomal subunit protein uS7.